Reading from the N-terminus, the 399-residue chain is UDP-N-acetylglucosamine--N-acetylmuramyl-(pentapeptide) pyrophosphoryl-undecaprenol N-acetylglucosamine transferase (399 aa).

Residues 29–31 (TAG), Asn148, Arg185, Ser219, and Gln318 contribute to the UDP-N-acetyl-alpha-D-glucosamine site.

It belongs to the glycosyltransferase 28 family. MurG subfamily.

It localises to the cell membrane. The catalysed reaction is di-trans,octa-cis-undecaprenyl diphospho-N-acetyl-alpha-D-muramoyl-L-alanyl-D-glutamyl-meso-2,6-diaminopimeloyl-D-alanyl-D-alanine + UDP-N-acetyl-alpha-D-glucosamine = di-trans,octa-cis-undecaprenyl diphospho-[N-acetyl-alpha-D-glucosaminyl-(1-&gt;4)]-N-acetyl-alpha-D-muramoyl-L-alanyl-D-glutamyl-meso-2,6-diaminopimeloyl-D-alanyl-D-alanine + UDP + H(+). It functions in the pathway cell wall biogenesis; peptidoglycan biosynthesis. Functionally, cell wall formation. Catalyzes the transfer of a GlcNAc subunit on undecaprenyl-pyrophosphoryl-MurNAc-pentapeptide (lipid intermediate I) to form undecaprenyl-pyrophosphoryl-MurNAc-(pentapeptide)GlcNAc (lipid intermediate II). The chain is UDP-N-acetylglucosamine--N-acetylmuramyl-(pentapeptide) pyrophosphoryl-undecaprenol N-acetylglucosamine transferase from Mycobacterium ulcerans (strain Agy99).